The primary structure comprises 343 residues: MDYKSAGVDVEAGRAFVQRIKSSVEATHRQEVVGGLGGFGGMMRLPAGLRQPLLVSGTDGVGTKLELAQDHQAHHNVGIDLVAMCVNDVITSGAQPLFFLDYMATGALSPDAMAEVVEGIADGCQQSGCSLLGGETAEMPGFYPAGRYDLAGFCVAVVEENELIDGQQVQPGDAVIGVASSGVHSNGFSLVRRVLAQAKADRSTLYGPDQRPLIDDLLRPTQLYASLVKHLLSSSLPIHAMAHITGGGLPENLPRCLPTGCRAQVSPTSWARPPLFDWLQSAGGIPERDLWHTFNLGIGFCVVVPRDQIDRTVAACRAQQLQAWPIGSIVEGNPEDGVIGLPD.

It belongs to the AIR synthase family.

It localises to the cytoplasm. The catalysed reaction is 2-formamido-N(1)-(5-O-phospho-beta-D-ribosyl)acetamidine + ATP = 5-amino-1-(5-phospho-beta-D-ribosyl)imidazole + ADP + phosphate + H(+). The protein operates within purine metabolism; IMP biosynthesis via de novo pathway; 5-amino-1-(5-phospho-D-ribosyl)imidazole from N(2)-formyl-N(1)-(5-phospho-D-ribosyl)glycinamide: step 2/2. The sequence is that of Phosphoribosylformylglycinamidine cyclo-ligase from Parasynechococcus marenigrum (strain WH8102).